Consider the following 677-residue polypeptide: MGTVPAGSRRAPGCGEGMFILCLALLLAPGAPAQYSVDDFGGLGRMFDGIGAISGGGATSRLLVNYPEPQRTEILDYLFKPNFGASLHIFKVEIGGDAQTTDGTEPSHMHYPDDQNYFRGYEWWLMKEAKKRNPAIKLIGLPWAFPGWIGYGKNWPYDFPDVTAYYVVSWIIGAKQYHNLDIDYIGIWNERAYDIKYIKVLRHTLDRLGLTNVGIIAADGDWGIAHDVLIDPYLNEAVQVIGAHYPGTHAAQDAIQTGKTLWASEDYSTYNDEVGGGCWARILNQNYVNGNMTSTISWNMVASYYEQLPFGLEGLMTAKEPWSGNYVVSTPIWITAHTTQFTQPGWYYLRTVGHLDKGGSYVALTDRLGNLTVIIETMSHNNSICIRPPLPEYNVSAQNATFYLQGSFQNLQELQVWYSNLDINNTKPVTFKKLTPVKVQNGSFTLQLGVNEVYTVTTLLTGQKGSFPDPPKSKPFPLKYKDDFSVRNPPFSEAPYFADQSGVFEYFTNTSDPGDHVFTFRQVLTQRPITWASDANQAISVIGNYQWSNITVTCDIYIETVETGGVFVAARVDQGGSPTDRAKGIFFWVFADGTYKVTGDLIGEIVLCKGLAGVRARSWHTLTLHVDGTNASGLLNGSPLWKEVVTGGPLHGWAAIGTSSFEFTQFDNFMIEAKDPE.

Positions 1–33 (MGTVPAGSRRAPGCGEGMFILCLALLLAPGAPA) are cleaved as a signal peptide. Substrate contacts are provided by Thr101, Trp143, and Asn189. Glu190 acts as the Proton donor/acceptor in catalysis. Glu265 serves as the catalytic Nucleophile. A disulfide bridge connects residues Cys278 and Cys385. N-linked (GlcNAc...) asparagine glycosylation is found at Asn291, Asn370, and Asn381. Arg387 is a binding site for substrate. N-linked (GlcNAc...) asparagine glycans are attached at residues Asn394, Asn399, Asn424, Asn441, Asn509, Asn549, and Asn630.

It belongs to the glycosyl hydrolase 59 family.

The protein localises to the lysosome. It carries out the reaction a beta-D-galactosyl-(1&lt;-&gt;1')-N-acylsphing-4-enine + H2O = an N-acylsphing-4-enine + D-galactose. The enzyme catalyses beta-D-galactosyl-(1&lt;-&gt;1)-sphing-4-enine + H2O = sphing-4-enine + D-galactose. The catalysed reaction is a D-galactosylceramide + H2O = an N-acyl-sphingoid base + D-galactose. Functionally, hydrolyzes the galactose ester bonds of glycolipids such as galactosylceramide and galactosylsphingosine. The protein is Galactocerebrosidase of Xenopus laevis (African clawed frog).